The following is a 594-amino-acid chain: F-box/LRR-repeat protein At3g58980 (594 aa).

The 49-residue stretch at 1–49 (MDRISNLPNEIICHIVSFLSAKEAAFASILSKRWRNLFTIVIKLQFDDS) folds into the F-box domain. LRR repeat units follow at residues 103–125 (ILDLKLDICAGRRYSLPLEVFTC), 128–151 (LVKLELGSDFGGFVVDLVPEDAFL), 152–174 (PALETLLLNYIRFKDLRRCAFEK), 203–218 (SPTLERLTISHVDLYE), 219–242 (CEFTRINLDTPNLTYLELSDAVPD), 249–272 (LDSLVEVKLDLTLMVDHKYHGYVD), 288–314 (LRNVEIMNLQSPNTFQAFSYFHEAIPV), 315–339 (FKNLYHLTITNNDTVIGFCWEFLPF), 344–369 (CPNLKTLVIDGPLHYNEDRPKSVCHC), 403–414 (LEKLSGLKLVKL), 415–437 (HSLTRFGSDKKKLLMLPRASSKC), 450–474 (LPSLKTLILDSVKFYDRCGCCAFQK), 503–518 (SQTLERLTIDHRYWAE), 519–541 (HNLESFTFDTPSLTYLDYNAHVP), and 584–594 (LRNVEILRLWM).

The chain is F-box/LRR-repeat protein At3g58980 from Arabidopsis thaliana (Mouse-ear cress).